Reading from the N-terminus, the 414-residue chain is Isocitrate dehydrogenase [NADP] cytoplasmic (414 aa).

S2 is modified (N-acetylserine). The residue at position 42 (Y42) is a Phosphotyrosine. NADP(+) is bound at residue 75-77 (TIT). Residue T77 participates in substrate binding. K81 carries the post-translational modification N6-acetyllysine. R82 lines the NADP(+) pocket. Residues 94 to 100 (SPNGTIR) and R109 contribute to the substrate site. The residue at position 126 (K126) is an N6-succinyllysine. Residues R132 and K212 each contribute to the substrate site. N6-acetyllysine occurs at positions 224 and 233. Residue D252 participates in Mn(2+) binding. K260 contacts NADP(+). Positions 275 and 279 each coordinate Mn(2+). 310-315 (GTVTRH) provides a ligand contact to NADP(+). K321 is modified (N6-acetyllysine). N328 provides a ligand contact to NADP(+). At S389 the chain carries Phosphoserine. K400 carries the post-translational modification N6-succinyllysine.

The protein belongs to the isocitrate and isopropylmalate dehydrogenases family. Homodimer. Mg(2+) is required as a cofactor. Mn(2+) serves as cofactor. Acetylation at Lys-374 dramatically reduces catalytic activity. Expressed preferentially in corneal epithelium. Constitute approximately 13% of the total soluble bovine corneal epithelial proteins.

It is found in the cytoplasm. Its subcellular location is the cytosol. It catalyses the reaction D-threo-isocitrate + NADP(+) = 2-oxoglutarate + CO2 + NADPH. Functionally, catalyzes the NADP(+)-dependent oxidative decarboxylation of isocitrate (D-threo-isocitrate) to 2-ketoglutarate (2-oxoglutarate), which is required by other enzymes such as the phytanoyl-CoA dioxygenase. Plays a critical role in the generation of NADPH, an important cofactor in many biosynthesis pathways. May act as a corneal epithelial crystallin and may be involved in maintaining corneal epithelial transparency. The sequence is that of Isocitrate dehydrogenase [NADP] cytoplasmic (IDH1) from Bos taurus (Bovine).